We begin with the raw amino-acid sequence, 297 residues long: Vacuolar protein sorting-associated protein 26 (297 aa).

This sequence belongs to the VPS26 family. In terms of assembly, component of the retromer complex, composed of VPS26, VPS29 and VPS35. As part of the retromer complex, interacts with the sorting receptor SORTLR/sortilin. Interacts with GTPase RAB7.

Functionally, plays a role in vesicular protein sorting. Component of the membrane-associated retromer complex which is essential in endosome-to-Golgi retrograde transport. The protein is Vacuolar protein sorting-associated protein 26 of Plasmodium falciparum (isolate 3D7).